The following is a 236-amino-acid chain: Demethylmenaquinone methyltransferase (236 aa).

S-adenosyl-L-methionine is bound by residues T58, D79, and 106 to 107; that span reads NA.

The protein belongs to the class I-like SAM-binding methyltransferase superfamily. MenG/UbiE family.

The catalysed reaction is a 2-demethylmenaquinol + S-adenosyl-L-methionine = a menaquinol + S-adenosyl-L-homocysteine + H(+). It functions in the pathway quinol/quinone metabolism; menaquinone biosynthesis; menaquinol from 1,4-dihydroxy-2-naphthoate: step 2/2. In terms of biological role, methyltransferase required for the conversion of demethylmenaquinol (DMKH2) to menaquinol (MKH2). In Alkalihalophilus pseudofirmus (strain ATCC BAA-2126 / JCM 17055 / OF4) (Bacillus pseudofirmus), this protein is Demethylmenaquinone methyltransferase.